Here is a 390-residue protein sequence, read N- to C-terminus: DNA polymerase IV (390 aa).

One can recognise a UmuC domain in the interval 6–187 (VMHVDLDAFF…LDIAVMPGIG (182 aa)). D10 and D105 together coordinate Mg(2+). Residue E106 is part of the active site.

Belongs to the DNA polymerase type-Y family. Monomer. The cofactor is Mg(2+).

Its subcellular location is the cytoplasm. The enzyme catalyses DNA(n) + a 2'-deoxyribonucleoside 5'-triphosphate = DNA(n+1) + diphosphate. Poorly processive, error-prone DNA polymerase involved in untargeted mutagenesis. Copies undamaged DNA at stalled replication forks, which arise in vivo from mismatched or misaligned primer ends. These misaligned primers can be extended by PolIV. Exhibits no 3'-5' exonuclease (proofreading) activity. May be involved in translesional synthesis, in conjunction with the beta clamp from PolIII. This is DNA polymerase IV from Dehalococcoides mccartyi (strain CBDB1).